The chain runs to 199 residues: Probable GTP-binding protein EngB (199 aa).

The EngB-type G domain occupies 21–196 (TKPEYAFIGR…LTYIDEINKQ (176 aa)). GTP-binding positions include 29–36 (GRSNVGKS), 56–60 (GKTQL), 74–77 (DLPG), 141–144 (TKID), and 175–177 (TSS). S36 and T58 together coordinate Mg(2+).

The protein belongs to the TRAFAC class TrmE-Era-EngA-EngB-Septin-like GTPase superfamily. EngB GTPase family. Mg(2+) is required as a cofactor.

Functionally, necessary for normal cell division and for the maintenance of normal septation. This Cytophaga hutchinsonii (strain ATCC 33406 / DSM 1761 / CIP 103989 / NBRC 15051 / NCIMB 9469 / D465) protein is Probable GTP-binding protein EngB.